We begin with the raw amino-acid sequence, 162 residues long: Transcriptional repressor NrdR (162 aa).

Residues 3–34 fold into a zinc finger; that stretch reads CPYCHHTDSRVLESRSAEGGQSIRRRRECLAC. One can recognise an ATP-cone domain in the interval 49-139; sequence ITVIKRNGDR…VYRQFQGISD (91 aa).

Belongs to the NrdR family. Requires Zn(2+) as cofactor.

In terms of biological role, negatively regulates transcription of bacterial ribonucleotide reductase nrd genes and operons by binding to NrdR-boxes. In Thermosynechococcus vestitus (strain NIES-2133 / IAM M-273 / BP-1), this protein is Transcriptional repressor NrdR.